The primary structure comprises 470 residues: Transcriptional activator PmfR (470 aa).

Forms oligomers in solution, probably homotetramers.

Its pathway is alkaloid degradation; nicotine degradation [regulation]. In terms of biological role, transcriptional regulator involved in the activation of the purU-mabO-folD-nepA-nepB and mao-ORF55-nbr operons implicated in the nicotine catabolic pathway. The sequence GTTT-14 bp-AAAC seems to be the core binding site of the regulator upstream of the -35 promoter region of the operon. This chain is Transcriptional activator PmfR (pmfR), found in Paenarthrobacter nicotinovorans (Arthrobacter nicotinovorans).